The sequence spans 307 residues: Oxygen-dependent coproporphyrinogen-III oxidase (307 aa).

Ser-97 is a substrate binding site. Residues His-101 and His-111 each coordinate a divalent metal cation. The active-site Proton donor is His-111. Residue 113-115 (NVR) participates in substrate binding. Positions 152 and 182 each coordinate a divalent metal cation. The interval 247 to 282 (YVEFNLVWDRGTHFGLQSGGRTESILMSMPPLASWS) is important for dimerization. A substrate-binding site is contributed by 265 to 267 (GGR).

This sequence belongs to the aerobic coproporphyrinogen-III oxidase family. Homodimer. Requires a divalent metal cation as cofactor.

The protein resides in the cytoplasm. The catalysed reaction is coproporphyrinogen III + O2 + 2 H(+) = protoporphyrinogen IX + 2 CO2 + 2 H2O. It functions in the pathway porphyrin-containing compound metabolism; protoporphyrin-IX biosynthesis; protoporphyrinogen-IX from coproporphyrinogen-III (O2 route): step 1/1. Involved in the heme biosynthesis. Catalyzes the aerobic oxidative decarboxylation of propionate groups of rings A and B of coproporphyrinogen-III to yield the vinyl groups in protoporphyrinogen-IX. The protein is Oxygen-dependent coproporphyrinogen-III oxidase of Polaromonas naphthalenivorans (strain CJ2).